Consider the following 124-residue polypeptide: Large ribosomal subunit protein bL12 (124 aa).

This sequence belongs to the bacterial ribosomal protein bL12 family. As to quaternary structure, homodimer. Part of the ribosomal stalk of the 50S ribosomal subunit. Forms a multimeric L10(L12)X complex, where L10 forms an elongated spine to which 2 to 4 L12 dimers bind in a sequential fashion. Binds GTP-bound translation factors.

In terms of biological role, forms part of the ribosomal stalk which helps the ribosome interact with GTP-bound translation factors. Is thus essential for accurate translation. This Burkholderia thailandensis (strain ATCC 700388 / DSM 13276 / CCUG 48851 / CIP 106301 / E264) protein is Large ribosomal subunit protein bL12.